The primary structure comprises 297 residues: Adrenocorticotropic hormone receptor (297 aa).

Residues 1–23 are Extracellular-facing; it reads MKHIITPYEHTNDTARNNSDCPD. N-linked (GlcNAc...) asparagine glycans are attached at residues asparagine 12 and asparagine 17. Intrachain disulfides connect cysteine 21/cysteine 253 and cysteine 245/cysteine 251. The helical transmembrane segment at 24-49 threads the bilayer; the sequence is VVLPEEIFFTISIIGVLENLIVLLAV. Topologically, residues 50–58 are cytoplasmic; sequence VKNKNLQCP. The helical transmembrane segment at 59 to 79 threads the bilayer; it reads MYFFICSLAISDMLGSLYKIL. Residues 80 to 104 are Extracellular-facing; sequence ENILIMFRNRGYLQPRGNFESTADD. A helical membrane pass occupies residues 105–126; that stretch reads IIDCMFILSLLGSIFSLSVIAA. Residues 127–147 are Cytoplasmic-facing; it reads DRYITIFHALQYHSIVTMRRT. Residues 148-168 form a helical membrane-spanning segment; that stretch reads IITLTVIWIFCTGSGIAMVIF. The Extracellular segment spans residues 169–180; that stretch reads SHHVPTVLTFTS. The chain crosses the membrane as a helical span at residues 181–199; sequence LFPLMLVFILCLYIHMFLL. At 200 to 217 the chain is on the cytoplasmic side; it reads ARSHARKISTLPRANMKG. A helical membrane pass occupies residues 218–244; it reads AITLTILLGVFIFCWAPFILHVLLMTF. The Extracellular segment spans residues 245–256; that stretch reads CPNNPYCVCYMS. A helical membrane pass occupies residues 257 to 278; the sequence is LFQINGMLIMCNAVIDPFIYAF. Residues 279–297 are Cytoplasmic-facing; sequence RSPELRDAFKKMFSCHRYQ. Cysteine 293 carries the S-palmitoyl cysteine lipid modification.

It belongs to the G-protein coupled receptor 1 family. In terms of assembly, homodimer. Interacts with corticotropin (ACTH). Interacts with MRAP; this interaction targets MC2R to the plasma membrane. Interacts with MRAP2; competing with MRAP for binding to MC2R and impairing the binding of corticotropin (ACTH). In terms of processing, ubiquitinated by MGRN1 that may be involved in post-endocytic trafficking and/or degradation of internalized receptor.

The protein localises to the cell membrane. In terms of biological role, hormone receptor primarily expressed in adrenal cortex that plays a key role in regulating adrenocortical function. Upon corticotropin (ACTH) binding, facilitates the release of adrenal glucocorticoids, including cortisol and corticosterone. In addition, MC2R is required for fetal and neonatal adrenal gland development. Mechanistically, activates adenylate cyclase (cAMP), the MAPK cascade as well as the cAMP-dependent protein kinase A pathway leading to steroidogenic factor 1/NR5A1-mediated transcriptional activation. This is Adrenocorticotropic hormone receptor (MC2R) from Mesocricetus auratus (Golden hamster).